The primary structure comprises 730 residues: Diacylglycerol kinase alpha (730 aa).

EF-hand domains follow at residues 111 to 146 (RPED…MMRV) and 156 to 191 (ELRP…TVPL). Ca(2+)-binding residues include Asp-124, Asp-126, Asn-128, Glu-135, Asp-169, Asp-171, Ser-173, Ser-175, and Glu-180. 2 Phorbol-ester/DAG-type zinc fingers span residues 206-254 (NHIW…AQPC) and 270-320 (SHLW…GPEC). The DAGKc domain occupies 368–501 (SNTHPLLVFI…LDRWFLEVIP (134 aa)). The residue at position 479 (Lys-479) is an N6-acetyllysine.

This sequence belongs to the eukaryotic diacylglycerol kinase family. Monomer.

It localises to the cytoplasm. It is found in the cytosol. The enzyme catalyses a 1,2-diacyl-sn-glycerol + ATP = a 1,2-diacyl-sn-glycero-3-phosphate + ADP + H(+). The catalysed reaction is a 1-O-alkyl-sn-glycerol + ATP = a 1-O-alkyl-sn-glycero-3-phosphate + ADP + H(+). It carries out the reaction 1-O-alkyl-2-acyl-sn-glycerol + ATP = 1-O-alkyl-2-acyl-sn-glycero-3-phosphate + ADP + H(+). It catalyses the reaction 1,2-dihexadecanoyl-sn-glycerol + ATP = 1,2-dihexadecanoyl-sn-glycero-3-phosphate + ADP + H(+). The enzyme catalyses 1-hexadecanoyl-2-(9Z-octadecenoyl)-sn-glycerol + ATP = 1-hexadecanoyl-2-(9Z-octadecenoyl)-sn-glycero-3-phosphate + ADP + H(+). The catalysed reaction is 2-(9Z-octadecenoyl)-glycerol + ATP = 2-(9Z-octadecenoyl)-sn-glycero-3-phosphate + ADP + H(+). It carries out the reaction 1,2-di-(9Z-octadecenoyl)-sn-glycerol + ATP = 1,2-di-(9Z-octadecenoyl)-sn-glycero-3-phosphate + ADP + H(+). It catalyses the reaction 1-octadecanoyl-2-(5Z,8Z,11Z,14Z-eicosatetraenoyl)-sn-glycerol + ATP = 1-octadecanoyl-2-(5Z,8Z,11Z,14Z-eicosatetraenoyl)-sn-glycero-3-phosphate + ADP + H(+). The enzyme catalyses 1,2-didecanoyl-sn-glycerol + ATP = 1,2-didecanoyl-sn-glycero-3-phosphate + ADP + H(+). The catalysed reaction is 1-O-hexadecyl-2-acetyl-sn-glycerol + ATP = 1-O-hexadecyl-2-acetyl-sn-glycero-3-phosphate + ADP + H(+). It carries out the reaction 1-O-hexadecyl-2-(5Z,8Z,11Z,14Z-eicosatetraenoyl)-sn-glycerol + ATP = 1-O-hexadecyl-2-(5Z,8Z,11Z,14Z-eicosatetraenoyl)-sn-glycero-3-phosphate + ADP + H(+). It catalyses the reaction 1-O-hexadecyl-2-(9Z-octadecenoyl)-sn-glycerol + ATP = 1-O-hexadecyl-2-(9Z-octadecenoyl)-sn-glycero-3-phosphate + ADP + H(+). The enzyme catalyses 1-O-hexadecyl-sn-glycerol + ATP = 1-O-hexadecyl-sn-glycero-3-phosphate + ADP + H(+). It participates in lipid metabolism; glycerolipid metabolism. Stimulated by calcium and phosphatidylserine. Functionally, diacylglycerol kinase that converts diacylglycerol/DAG into phosphatidic acid/phosphatidate/PA and regulates the respective levels of these two bioactive lipids. Thereby, acts as a central switch between the signaling pathways activated by these second messengers with different cellular targets and opposite effects in numerous biological processes. Also plays an important role in the biosynthesis of complex lipids. Can also phosphorylate 1-alkyl-2-acylglycerol in vitro as efficiently as diacylglycerol provided it contains an arachidonoyl group. Also involved in the production of alkyl-lysophosphatidic acid, another bioactive lipid, through the phosphorylation of 1-alkyl-2-acetyl glycerol. The polypeptide is Diacylglycerol kinase alpha (Dgka) (Mus musculus (Mouse)).